Consider the following 555-residue polypeptide: MVKRGKKTKYLFVTGGVVSSLGKGLSAASIGALLENRGLEVQHLKLDPYINVDPGTMSPFQHGEVFVTDDGAETDLDLGHYERFTSAKMTRRNNYTTGRIYQNVIQRERRGEYLGKTVQVIPHITDEIKAVIREAAGGADILIVEVGGTVGDIESLPFLEAIRQMKYDVGEENAVYAHLTLVPFIAAAGELKTKPTQHSVKELREIGIQPDLLLCRSDREIPRDMKDKIALFCNVDPSAVFTALDVPSIYEVPLSLHREGLDDKLAELFNIWSRAPRLERWETIVDKVKNPRRGEVRIGIVGKYVELHESYKSLNEALVHGGIANDARVKLAFIDSTKLEEGDLSDLDKVDAILVPGGFGIRGTEGKILGVKYAREHKVPFFGICLGLQMAVIEMARNVLGLAGANSLEFDEQTPHPVVTLMEGQKGVTDKGGTMRLGAYPCALKEGTKARALYGADLVHERHRHRFEFNNDYRAQFEAAGMVFSGVNPDLGLVEMIELPGQHFVGCQFHPEFRSKPFAPHPLFAGFVKAALEHRDAQQRQPSAEVKKLPVGKNG.

Residues 1 to 271 (MVKRGKKTKY…DDKLAELFNI (271 aa)) are amidoligase domain. S19 is a CTP binding site. S19 contacts UTP. ATP contacts are provided by residues 20 to 25 (SLGKGL) and D77. 2 residues coordinate Mg(2+): D77 and E145. CTP-binding positions include 152–154 (DIE), 192–197 (KTKPTQ), and K228. Residues 192 to 197 (KTKPTQ) and K228 contribute to the UTP site. Positions 297–537 (RIGIVGKYVE…VKAALEHRDA (241 aa)) constitute a Glutamine amidotransferase type-1 domain. G358 serves as a coordination point for L-glutamine. Residue C385 is the Nucleophile; for glutamine hydrolysis of the active site. L-glutamine contacts are provided by residues 386-389 (LGLQ), E409, and R466. Catalysis depends on residues H510 and E512. Residues 536-555 (DAQQRQPSAEVKKLPVGKNG) form a disordered region.

This sequence belongs to the CTP synthase family. As to quaternary structure, homotetramer.

It catalyses the reaction UTP + L-glutamine + ATP + H2O = CTP + L-glutamate + ADP + phosphate + 2 H(+). The catalysed reaction is L-glutamine + H2O = L-glutamate + NH4(+). It carries out the reaction UTP + NH4(+) + ATP = CTP + ADP + phosphate + 2 H(+). The protein operates within pyrimidine metabolism; CTP biosynthesis via de novo pathway; CTP from UDP: step 2/2. Its activity is regulated as follows. Allosterically activated by GTP, when glutamine is the substrate; GTP has no effect on the reaction when ammonia is the substrate. The allosteric effector GTP functions by stabilizing the protein conformation that binds the tetrahedral intermediate(s) formed during glutamine hydrolysis. Inhibited by the product CTP, via allosteric rather than competitive inhibition. Functionally, catalyzes the ATP-dependent amination of UTP to CTP with either L-glutamine or ammonia as the source of nitrogen. Regulates intracellular CTP levels through interactions with the four ribonucleotide triphosphates. This is CTP synthase from Anaeromyxobacter dehalogenans (strain 2CP-C).